The sequence spans 463 residues: Chromosomal replication initiator protein DnaA (463 aa).

The interval 1-83 is domain I, interacts with DnaA modulators; it reads MSTNQIILTD…LQLFQHYNNT (83 aa). Positions 83–124 are domain II; that stretch reads TIKSIEIITKELPGITQTVIALPTKTFADIGSSELNAENIFS. Residues 125–343 form a domain III, AAA+ region region; that stretch reads TLDVRFTFDN…GALNKVIAHS (219 aa). 4 residues coordinate ATP: G171, G173, K174, and T175. Residues 344-463 form a domain IV, binds dsDNA region; the sequence is NFTLKEITLE…INLLMKILQN (120 aa).

This sequence belongs to the DnaA family. As to quaternary structure, oligomerizes as a right-handed, spiral filament on DNA at oriC.

It localises to the cytoplasm. Plays an essential role in the initiation and regulation of chromosomal replication. ATP-DnaA binds to the origin of replication (oriC) to initiate formation of the DNA replication initiation complex once per cell cycle. Binds the DnaA box (a 9 base pair repeat at the origin) and separates the double-stranded (ds)DNA. Forms a right-handed helical filament on oriC DNA; dsDNA binds to the exterior of the filament while single-stranded (ss)DNA is stabiized in the filament's interior. The ATP-DnaA-oriC complex binds and stabilizes one strand of the AT-rich DNA unwinding element (DUE), permitting loading of DNA polymerase. After initiation quickly degrades to an ADP-DnaA complex that is not apt for DNA replication. Binds acidic phospholipids. The protein is Chromosomal replication initiator protein DnaA of Rickettsia massiliae (strain Mtu5).